Reading from the N-terminus, the 476-residue chain is 3-isopropylmalate dehydratase large subunit (476 aa).

3 residues coordinate [4Fe-4S] cluster: Cys353, Cys413, and Cys416.

It belongs to the aconitase/IPM isomerase family. LeuC type 1 subfamily. Heterodimer of LeuC and LeuD. [4Fe-4S] cluster serves as cofactor.

The catalysed reaction is (2R,3S)-3-isopropylmalate = (2S)-2-isopropylmalate. It participates in amino-acid biosynthesis; L-leucine biosynthesis; L-leucine from 3-methyl-2-oxobutanoate: step 2/4. Catalyzes the isomerization between 2-isopropylmalate and 3-isopropylmalate, via the formation of 2-isopropylmaleate. This chain is 3-isopropylmalate dehydratase large subunit, found in Photobacterium profundum (strain SS9).